We begin with the raw amino-acid sequence, 421 residues long: MQLLNFGLLLLPFVAGDLAPQPEPLLVGPSDIVPGQYLVTLKEGLTSAQIRDHKKWVSSVHRANLDSFAAGARGVETEGIMKHFHIHDLNMYSGGFDEKRVEDLSRSPYVKSVHPDQHFYLAKTVTQRQARWGLGYMSSKGKPVPLHSTLVDYSYDDKAGEGVWAYVLDTGINVNHVEFEGRAILGHNAIPNKSHTDEFGHGTCVAGIIAGKTYGVAKKANVVSAKAFDTGSSTYNYILETYDWIIRNITDSNRKNKAVINLSISGAKYQPFDDAAERAFKAGITTVVAAGNDGKDAKNNTPASSPNAITVGAVRWENTRPSFSNYGKIVDIWAPGELIKSCWKGGNNATSTQSGTSAASPHVAGLVAYLMSIKNLPSPSAVTARVLNLTIPNLVKDAKDSPNRVVYNGIQERKCKLPKYY.

The first 16 residues, 1–16, serve as a signal peptide directing secretion; it reads MQLLNFGLLLLPFVAG. Residues 17–122 constitute a propeptide that is removed on maturation; the sequence is DLAPQPEPLL…VHPDQHFYLA (106 aa). One can recognise an Inhibitor I9 domain in the interval 36-121; sequence QYLVTLKEGL…SVHPDQHFYL (86 aa). One can recognise a Peptidase S8 domain in the interval 131 to 421; sequence RWGLGYMSSK…ERKCKLPKYY (291 aa). Catalysis depends on Asp169, which acts as the Charge relay system. The N-linked (GlcNAc...) asparagine glycan is linked to Asn192. His201 functions as the Charge relay system in the catalytic mechanism. N-linked (GlcNAc...) asparagine glycosylation is found at Asn248, Asn261, and Asn348. Residue Ser357 is the Charge relay system of the active site. A glycan (N-linked (GlcNAc...) asparagine) is linked at Asn388.

The protein belongs to the peptidase S8 family.

It is found in the secreted. Functionally, secreted subtilisin-like serine protease with keratinolytic activity that contributes to pathogenicity. The polypeptide is Subtilisin-like protease 2 (SUB2) (Trichophyton rubrum (Athlete's foot fungus)).